The primary structure comprises 346 residues: Magnesium-chelatase 38 kDa subunit (346 aa).

Residue glycine 34 to serine 41 participates in ATP binding.

The protein belongs to the Mg-chelatase subunits D/I family.

It catalyses the reaction protoporphyrin IX + Mg(2+) + ATP + H2O = Mg-protoporphyrin IX + ADP + phosphate + 3 H(+). Its pathway is porphyrin-containing compound metabolism; bacteriochlorophyll biosynthesis. Its function is as follows. Involved in bacteriochlorophyll biosynthesis; introduces a magnesium ion into protoporphyrin IX to yield Mg-protoporphyrin IX. This Chlorobaculum parvum (strain DSM 263 / NCIMB 8327) (Chlorobium vibrioforme subsp. thiosulfatophilum) protein is Magnesium-chelatase 38 kDa subunit (bchI).